The following is a 311-amino-acid chain: Salutaridine reductase (311 aa).

NADP(+) contacts are provided by residues 21 to 24 (NKGI), arginine 44, 70 to 71 (DV), and asparagine 98. Residues tyrosine 129 and serine 180 each coordinate substrate. Residues tyrosine 236, lysine 240, and 267–272 (VKTEMN) each bind NADP(+). The Proton acceptor role is filled by tyrosine 236. A disulfide bond links cysteine 263 and cysteine 305.

It belongs to the short-chain dehydrogenases/reductases (SDR) family.

The catalysed reaction is (7S)-salutaridinol + NADP(+) = salutaridine + NADPH + H(+). It functions in the pathway alkaloid biosynthesis; morphine biosynthesis. Its activity is regulated as follows. Strong substrate inhibition. Was thought to be due to mutually exclusive productive and non-productive modes of substrate binding in the active site. Alternatively, SALR may undergo significant conformational changes during catalytic turnover. Its function is as follows. Short-chain dehydrogenases/reductases involved in biosynthesis of morphinan-type benzylisoquinoline and opiate alkaloids natural products. Catalyzes specifically the stereospecific conversion of salutaridine to salutaridinol. The protein is Salutaridine reductase of Papaver somniferum (Opium poppy).